Consider the following 298-residue polypeptide: tRNA pseudouridine synthase B (298 aa).

Catalysis depends on Asp45, which acts as the Nucleophile.

This sequence belongs to the pseudouridine synthase TruB family. Type 1 subfamily.

It carries out the reaction uridine(55) in tRNA = pseudouridine(55) in tRNA. In terms of biological role, responsible for synthesis of pseudouridine from uracil-55 in the psi GC loop of transfer RNAs. This is tRNA pseudouridine synthase B from Thiobacillus denitrificans (strain ATCC 25259 / T1).